We begin with the raw amino-acid sequence, 184 residues long: Peptide methionine sulfoxide reductase (184 aa).

The residue at position 58 (Ser-58) is a Phosphoserine.

This sequence belongs to the MsrA Met sulfoxide reductase family.

It carries out the reaction L-methionyl-[protein] + [thioredoxin]-disulfide + H2O = L-methionyl-(S)-S-oxide-[protein] + [thioredoxin]-dithiol. The enzyme catalyses [thioredoxin]-disulfide + L-methionine + H2O = L-methionine (S)-S-oxide + [thioredoxin]-dithiol. Has an important function as a repair enzyme for proteins that have been inactivated by oxidation. Catalyzes the reversible oxidation-reduction of methionine sulfoxide in proteins to methionine. Also able to reduce dimethyl sulfoxide (DMSO) as well, with DMS as the product. The sequence is that of Peptide methionine sulfoxide reductase (MXR1) from Saccharomyces cerevisiae (strain ATCC 204508 / S288c) (Baker's yeast).